We begin with the raw amino-acid sequence, 231 residues long: Ribosome maturation factor RimM (231 aa).

Positions 1–29 (MSERDSGSSGRAKAKRQPGAKAPFGPFVR) are disordered. The region spanning 150 to 231 (TDEYYWVDLV…KIIVDWEADY (82 aa)) is the PRC barrel domain.

The protein belongs to the RimM family. As to quaternary structure, binds ribosomal protein uS19.

Its subcellular location is the cytoplasm. Functionally, an accessory protein needed during the final step in the assembly of 30S ribosomal subunit, possibly for assembly of the head region. Essential for efficient processing of 16S rRNA. May be needed both before and after RbfA during the maturation of 16S rRNA. It has affinity for free ribosomal 30S subunits but not for 70S ribosomes. The chain is Ribosome maturation factor RimM from Paraburkholderia phymatum (strain DSM 17167 / CIP 108236 / LMG 21445 / STM815) (Burkholderia phymatum).